A 360-amino-acid chain; its full sequence is Peptide chain release factor 1 (360 aa).

At Q235 the chain carries N5-methylglutamine. Positions 284 to 313 (AKRQQAEASTRRNLLGSGDRSDRNRTYNFP) are disordered.

Belongs to the prokaryotic/mitochondrial release factor family. Post-translationally, methylated by PrmC. Methylation increases the termination efficiency of RF1.

The protein localises to the cytoplasm. Its function is as follows. Peptide chain release factor 1 directs the termination of translation in response to the peptide chain termination codons UAG and UAA. This is Peptide chain release factor 1 from Salmonella gallinarum (strain 287/91 / NCTC 13346).